A 1408-amino-acid chain; its full sequence is ARF guanine-nucleotide exchange factor 1 (1408 aa).

S49 carries the post-translational modification Phosphoserine. Positions 262–287 (TTTSDNDLSSTDDDSAVADDNKNEKP) are disordered. The 155-residue stretch at 552-706 (FNEKAKKGIQ…IIMLNTDSHN (155 aa)) folds into the SEC7 domain.

Interacts (via N-terminal region) with SEC21 (via C-terminus). Interacts with GMH1. Interacts with DRS2.

The protein resides in the cytoplasm. The protein localises to the cytosol. It is found in the membrane. It localises to the endoplasmic reticulum. Its subcellular location is the mitochondrion. In terms of biological role, activates the ARF proteins by exchanging bound GDP for free GTP. Plays a role in maintaining mitochondrial morphology, and in the turnover of mitochondria through mitophagy. The protein is ARF guanine-nucleotide exchange factor 1 (GEA1) of Saccharomyces cerevisiae (strain ATCC 204508 / S288c) (Baker's yeast).